The following is a 311-amino-acid chain: Acetyl-coenzyme A carboxylase carboxyl transferase subunit alpha (311 aa).

Residues Glu34–Glu286 form the CoA carboxyltransferase C-terminal domain.

The protein belongs to the AccA family. In terms of assembly, acetyl-CoA carboxylase is a heterohexamer composed of biotin carboxyl carrier protein (AccB), biotin carboxylase (AccC) and two subunits each of ACCase subunit alpha (AccA) and ACCase subunit beta (AccD).

It is found in the cytoplasm. It catalyses the reaction N(6)-carboxybiotinyl-L-lysyl-[protein] + acetyl-CoA = N(6)-biotinyl-L-lysyl-[protein] + malonyl-CoA. Its pathway is lipid metabolism; malonyl-CoA biosynthesis; malonyl-CoA from acetyl-CoA: step 1/1. Its function is as follows. Component of the acetyl coenzyme A carboxylase (ACC) complex. First, biotin carboxylase catalyzes the carboxylation of biotin on its carrier protein (BCCP) and then the CO(2) group is transferred by the carboxyltransferase to acetyl-CoA to form malonyl-CoA. In Nitratiruptor sp. (strain SB155-2), this protein is Acetyl-coenzyme A carboxylase carboxyl transferase subunit alpha.